Reading from the N-terminus, the 284-residue chain is Acetyl-coenzyme A carboxylase carboxyl transferase subunit beta (284 aa).

The CoA carboxyltransferase N-terminal domain maps to 27-284 (LMTKCPSCKY…ELHDGGVRHV (258 aa)). Positions 31, 34, 50, and 52 each coordinate Zn(2+). The C4-type zinc-finger motif lies at 31–52 (CPSCKYMHYTKQLNENHKVCDC).

Belongs to the AccD/PCCB family. Acetyl-CoA carboxylase is a heterohexamer composed of biotin carboxyl carrier protein (AccB), biotin carboxylase (AccC) and two subunits each of ACCase subunit alpha (AccA) and ACCase subunit beta (AccD). The cofactor is Zn(2+).

The protein resides in the cytoplasm. The enzyme catalyses N(6)-carboxybiotinyl-L-lysyl-[protein] + acetyl-CoA = N(6)-biotinyl-L-lysyl-[protein] + malonyl-CoA. It participates in lipid metabolism; malonyl-CoA biosynthesis; malonyl-CoA from acetyl-CoA: step 1/1. In terms of biological role, component of the acetyl coenzyme A carboxylase (ACC) complex. Biotin carboxylase (BC) catalyzes the carboxylation of biotin on its carrier protein (BCCP) and then the CO(2) group is transferred by the transcarboxylase to acetyl-CoA to form malonyl-CoA. This is Acetyl-coenzyme A carboxylase carboxyl transferase subunit beta from Exiguobacterium sp. (strain ATCC BAA-1283 / AT1b).